Here is a 432-residue protein sequence, read N- to C-terminus: Neuronal pentraxin-1 (432 aa).

An N-terminal signal peptide occupies residues Met1–Ala22. Residues Glu90 to Glu128 form a disordered region. N-linked (GlcNAc...) asparagine glycans are attached at residues Asn154 and Asn193. Residues Asp226–Cys428 form the Pentraxin (PTX) domain. The cysteines at positions 256 and 316 are disulfide-linked. Residues Asn280, Glu358, Gln359, Asp360, and Gln370 each coordinate Ca(2+).

As to quaternary structure, homooligomer or heterooligomer (probably pentamer) with neuronal pentraxin receptor (NPTXR). The cofactor is Ca(2+). Post-translationally, glycosylated. In terms of tissue distribution, cerebellum, hippocampus and cerebral cortex.

Its subcellular location is the secreted. The protein resides in the cytoplasmic vesicle. It is found in the secretory vesicle. It localises to the endoplasmic reticulum. Functionally, may be involved in mediating uptake of synaptic material during synapse remodeling or in mediating the synaptic clustering of AMPA glutamate receptors at a subset of excitatory synapses. The chain is Neuronal pentraxin-1 (Nptx1) from Rattus norvegicus (Rat).